A 90-amino-acid polypeptide reads, in one-letter code: Small ribosomal subunit protein uS15c (90 aa).

Belongs to the universal ribosomal protein uS15 family. Part of the 30S ribosomal subunit.

It is found in the plastid. Its subcellular location is the chloroplast. This is Small ribosomal subunit protein uS15c (rps15) from Panax ginseng (Korean ginseng).